An 892-amino-acid chain; its full sequence is Translation initiation factor IF-2 (892 aa).

The disordered stretch occupies residues 88–306 (KKRTFVKRDP…LQQGFQKPAQ (219 aa)). Basic and acidic residues-rich tracts occupy residues 93-159 (VKRD…KDKV) and 166-216 (DMIK…EENK). Positions 254-269 (GRGRNAKAARPAKKGK) are enriched in basic residues. The segment covering 270 to 282 (HAESKADREEARA) has biased composition (basic and acidic residues). The region spanning 391 to 560 (PRAPVVTIMG…LLQAEVLELK (170 aa)) is the tr-type G domain. The interval 400-407 (GHVDHGKT) is G1. Residue 400-407 (GHVDHGKT) coordinates GTP. Residues 425-429 (GITQH) are G2. The interval 446–449 (DTPG) is G3. GTP-binding positions include 446-450 (DTPGH) and 500-503 (NKID). The segment at 500-503 (NKID) is G4. The interval 536 to 538 (SAK) is G5.

Belongs to the TRAFAC class translation factor GTPase superfamily. Classic translation factor GTPase family. IF-2 subfamily.

It is found in the cytoplasm. Functionally, one of the essential components for the initiation of protein synthesis. Protects formylmethionyl-tRNA from spontaneous hydrolysis and promotes its binding to the 30S ribosomal subunits. Also involved in the hydrolysis of GTP during the formation of the 70S ribosomal complex. This Salmonella schwarzengrund (strain CVM19633) protein is Translation initiation factor IF-2.